Consider the following 989-residue polypeptide: Voltage-gated delayed rectifier potassium channel KCNH1 (989 aa).

At 1–220 the chain is on the cytoplasmic side; the sequence is MTMAGGRRGL…LHYCVFKTTW (220 aa). In terms of domain architecture, PAS spans 14–94; the sequence is QNTFLENIVR…QTFENYEMNS (81 aa). Residues 93–145 enclose the PAC domain; the sequence is NSFEILMYKKNRTPVWFFVKIAPIRNEQDKVVLFLCTFSDITAFKQPIEDDSC. The segment at 151–162 is required for phosphatidylinositol bisphosphate binding; that stretch reads FARLTRALTSSR. A helical membrane pass occupies residues 221 to 241; the sequence is DWIILILTFYTAILVPYNVSF. Residues 242-248 lie on the Extracellular side of the membrane; it reads KTRQNNV. A helical membrane pass occupies residues 249–269; sequence AWLVVDSIVDVIFLVDIVLNF. Residues 270–290 lie on the Cytoplasmic side of the membrane; it reads HTTFVGPAGEVISDPKLIRMN. Residues 291–309 form a helical membrane-spanning segment; it reads YLKTWFVIDLLSCLPYDVI. Residues 310–345 lie on the Extracellular side of the membrane; that stretch reads NAFENVDEVSAFMGDPGKIGFADQIPPPLEGRESQG. The helical; Voltage-sensor transmembrane segment at 346–368 threads the bilayer; it reads ISSLFSSLKVVRLLRLGRVARKL. The Cytoplasmic segment spans residues 369–377; sequence DHYIEYGAA. Residues 378-399 form a helical membrane-spanning segment; sequence VLVLLVCVFGLAAHWMACIWYS. Residues 400–448 lie on the Extracellular side of the membrane; the sequence is IGDYEIFDEDTKTIRNNSWLYQLALDIGTPYQFNGSGSGKWEGGPSKNS. N-linked (GlcNAc...) asparagine glycosylation is found at Asn-415 and Asn-433. The pore-forming intramembrane region spans 449-470; the sequence is VYISSLYFTMTSLTSVGFGNIA. The Selectivity filter signature appears at 463–468; sequence SVGFGN. The Extracellular segment spans residues 471–477; sequence PSTDIEK. Residues 478-498 traverse the membrane as a helical segment; it reads IFAVAIMMIGSLLYATIFGNV. Topologically, residues 499-989 are cytoplasmic; that stretch reads TTIFQQMYAN…ESDRDIFGAS (491 aa). The calmodulin-binding stretch occupies residues 673 to 770; the sequence is KRDALQKVLE…LDDLDVEKGN (98 aa). The tract at residues 699-701 is interaction with cyclic nucleotide-binding pocket; it reads YNL. Basic and acidic residues-rich tracts occupy residues 857–879 and 887–901; these read ESMETLPERTKAPGEATLKKTDS and SDLRLDNVGETRSPQ. 2 disordered regions span residues 857 to 905 and 961 to 989; these read ESME…DRSP and RGSAQSPQETGEISRPQSPESDRDIFGAS. Residues 924–964 form a CAD (involved in subunit assembly) region; sequence ATVLEVKYELKEDIKALNAKMTSIEKQLSEILRILMSRGSA. A compositionally biased stretch (polar residues) spans 962–979; it reads GSAQSPQETGEISRPQSP. Phosphoserine is present on residues Ser-974, Ser-978, and Ser-981. Basic and acidic residues predominate over residues 980–989; sequence ESDRDIFGAS.

The protein belongs to the potassium channel family. H (Eag) (TC 1.A.1.20) subfamily. Kv10.1/KCNH1 sub-subfamily. In terms of assembly, homomultimer. The potassium channel is composed of a homo- or heterotetrameric complex of pore-forming alpha subunits that can associate with modulating beta subunits. Heteromultimer with KCNH5/EAG2. Interacts with ALG10B. Interacts with RABEP1. Interacts (via C-terminus) with CTTN. Interacts (via C-terminal cytoplasmic region) with Ca(2+)-bound calmodulin. In terms of processing, channel activity is regulated via tyrosine phosphorylation/dephosphorylation by SRC and PTPN6. As to expression, detected in brain (at protein level). Highly expressed in olfactory bulb. Detected in brain cortex, hippocampus, brain stem, striatum, thalamus, hypothalamus and spinal cord.

It localises to the cell membrane. It is found in the nucleus inner membrane. The protein resides in the cell projection. Its subcellular location is the dendrite. The protein localises to the axon. It localises to the presynaptic cell membrane. It is found in the perikaryon. The protein resides in the postsynaptic density membrane. Its subcellular location is the early endosome membrane. The catalysed reaction is K(+)(in) = K(+)(out). Its activity is regulated as follows. Channel activity is inhibited by interaction with Ca(2+)-bound calmodulin. Interaction of a single pore-forming alpha subunit with a calmodulin chain is sufficient to promote channel closure. Channel activity is not regulated by cyclic nucleotides. Channel activity is inhibited by binding intracellular phosphatidylinositol-3,5-bisphosphate and phosphatidylinositol-4,5-bisphosphate (PIP2), but is not inhibited by phosphatidylinositol 4-phosphate. Pore-forming (alpha) subunit of a voltage-gated delayed rectifier potassium channel that mediates outward-rectifying potassium currents which, on depolarization, reaches a steady-state level and do not inactivate. The activation kinetics depend on the prepulse potential and external divalent cation concentration. With negative prepulses, the current activation is delayed and slowed down several fold, whereas more positive prepulses speed up activation. The time course of activation is biphasic with a fast and a slowly activating current component. Activates at more positive membrane potentials and exhibit a steeper activation curve. Channel properties are modulated by subunit assembly. Mediates IK(NI) current in myoblasts. Involved in the regulation of cell proliferation and differentiation, in particular adipogenic and osteogenic differentiation in bone marrow-derived mesenchymal stem cells (MSCs). This chain is Voltage-gated delayed rectifier potassium channel KCNH1, found in Mus musculus (Mouse).